The following is a 193-amino-acid chain: Probable GTP-binding protein EngB (193 aa).

Residues 22–193 (SFPEIVFAGR…LAHFDQYICQ (172 aa)) form the EngB-type G domain. GTP contacts are provided by residues 30–37 (GRSNVGKS), 57–61 (GKTRL), 75–78 (DLPG), 142–145 (TKYD), and 172–174 (YSS). 2 residues coordinate Mg(2+): Ser37 and Thr59.

It belongs to the TRAFAC class TrmE-Era-EngA-EngB-Septin-like GTPase superfamily. EngB GTPase family. Mg(2+) is required as a cofactor.

Functionally, necessary for normal cell division and for the maintenance of normal septation. The polypeptide is Probable GTP-binding protein EngB (Pelodictyon phaeoclathratiforme (strain DSM 5477 / BU-1)).